A 293-amino-acid polypeptide reads, in one-letter code: ATP phosphoribosyltransferase (293 aa).

It belongs to the ATP phosphoribosyltransferase family. Long subfamily. The cofactor is Mg(2+).

The protein resides in the cytoplasm. The catalysed reaction is 1-(5-phospho-beta-D-ribosyl)-ATP + diphosphate = 5-phospho-alpha-D-ribose 1-diphosphate + ATP. Its pathway is amino-acid biosynthesis; L-histidine biosynthesis; L-histidine from 5-phospho-alpha-D-ribose 1-diphosphate: step 1/9. Its activity is regulated as follows. Feedback inhibited by histidine. Catalyzes the condensation of ATP and 5-phosphoribose 1-diphosphate to form N'-(5'-phosphoribosyl)-ATP (PR-ATP). Has a crucial role in the pathway because the rate of histidine biosynthesis seems to be controlled primarily by regulation of HisG enzymatic activity. This chain is ATP phosphoribosyltransferase, found in Nitratidesulfovibrio vulgaris (strain DSM 19637 / Miyazaki F) (Desulfovibrio vulgaris).